Here is a 640-residue protein sequence, read N- to C-terminus: Scarecrow-like protein 27 (640 aa).

Low complexity-rich tracts occupy residues 68–79 (SYSSTTTTLSSS) and 86–98 (TVTNTTVTAGDDN). Residues 68 to 98 (SYSSTTTTLSSSHGGGGTTVTNTTVTAGDDN) are disordered. A GRAS domain is found at 259–639 (GMAGDDQSVI…KELVTVSAWK (381 aa)). The segment at 266–331 (SVIIEQLFNA…AEALLSLIHN (66 aa)) is leucine repeat I (LRI). Positions 350-422 (YRSFSETSPF…NRASSLKLTV (73 aa)) are VHIID. The VHIID motif lies at 383 to 387 (IHIID). The leucine repeat II (LRII) stretch occupies residues 438–470 (FTEENLKTFAGEVKIPFEIELLSVELLLNPAYW). The PFYRE stretch occupies residues 480-565 (EAIAVNLPVN…RFWVQPSIEK (86 aa)). Residues 568-639 (MKRHRWIERS…KELVTVSAWK (72 aa)) are SAW.

The protein belongs to the GRAS family. As to expression, expressed in seedlings, roots, cotyledons, leaves and flowers.

Its subcellular location is the nucleus. Its function is as follows. Probable transcription factor involved in plant development. The sequence is that of Scarecrow-like protein 27 (SCL27) from Arabidopsis thaliana (Mouse-ear cress).